A 429-amino-acid polypeptide reads, in one-letter code: Glutamate-1-semialdehyde 2,1-aminomutase (429 aa).

Lys-264 carries the post-translational modification N6-(pyridoxal phosphate)lysine.

It belongs to the class-III pyridoxal-phosphate-dependent aminotransferase family. HemL subfamily. As to quaternary structure, homodimer. Pyridoxal 5'-phosphate serves as cofactor.

It localises to the cytoplasm. The enzyme catalyses (S)-4-amino-5-oxopentanoate = 5-aminolevulinate. The protein operates within porphyrin-containing compound metabolism; protoporphyrin-IX biosynthesis; 5-aminolevulinate from L-glutamyl-tRNA(Glu): step 2/2. This chain is Glutamate-1-semialdehyde 2,1-aminomutase, found in Campylobacter curvus (strain 525.92).